The primary structure comprises 326 residues: Vitamin B12 import system permease protein BtuC (326 aa).

9 helical membrane passes run 15–35 (WLLS…CAGE), 61–81 (LAVL…QALF), 88–108 (PGLL…VLLG), 112–132 (LPGW…TLIL), 146–166 (LLAG…AIYF), 184–204 (GGVD…LIWI), 240–260 (GWMV…GLVI), 274–294 (VLLP…DVVA), and 302–322 (ELPI…WLLL).

This sequence belongs to the binding-protein-dependent transport system permease family. FecCD subfamily. As to quaternary structure, the complex is composed of two ATP-binding proteins (BtuD), two transmembrane proteins (BtuC) and a solute-binding protein (BtuF).

It is found in the cell inner membrane. In terms of biological role, part of the ABC transporter complex BtuCDF involved in vitamin B12 import. Involved in the translocation of the substrate across the membrane. This chain is Vitamin B12 import system permease protein BtuC, found in Salmonella choleraesuis (strain SC-B67).